Consider the following 556-residue polypeptide: Carotenoid-cleaving dioxygenase, mitochondrial (556 aa).

Fe cation is bound by residues His203, His263, His334, and His550.

Belongs to the carotenoid oxygenase family. It depends on Fe(2+) as a cofactor.

It localises to the mitochondrion. The enzyme catalyses all-trans-beta-carotene + O2 = beta-ionone + all-trans-10'-apo-beta-carotenal. It catalyses the reaction 5-cis-lycopene + O2 = 5-cis-10'-apo-lycopenal + (3E,5E)-6,10-dimethylundeca-3,5,9-trien-2-one. The catalysed reaction is 13-cis-lycopene + O2 = 13-cis-10'-apo-lycopenal + (3E,5E)-6,10-dimethylundeca-3,5,9-trien-2-one. It carries out the reaction lutein + O2 = (3R,6R)-hydroxy-alpha-ionone + (3R)-3-hydroxy-10'-apo-beta-carotenal. The enzyme catalyses lutein + O2 = (3R,6R)-3-hydroxy-10'-apo-alpha-carotenal + (3R)-hydroxy-beta-ionone. It catalyses the reaction all-trans-zeaxanthin + 2 O2 = 4,9-dimethyldodeca-2,4,6,8,10-pentaenedial + 2 (3R)-hydroxy-beta-ionone. The catalysed reaction is all-trans-zeaxanthin + O2 = (3R)-3-hydroxy-10'-apo-beta-carotenal + (3R)-hydroxy-beta-ionone. It carries out the reaction beta-cryptoxanthin + O2 = all-trans-10'-apo-beta-carotenal + (3R)-hydroxy-beta-ionone. The enzyme catalyses all-trans-10'-apo-beta-carotenal + O2 = beta-ionone + 4,9-dimethyldodeca-2,4,6,8,10-pentaenedial. It catalyses the reaction (3R)-3-hydroxy-10'-apo-beta-carotenal + O2 = 4,9-dimethyldodeca-2,4,6,8,10-pentaenedial + (3R)-hydroxy-beta-ionone. The catalysed reaction is (3R,6R)-3-hydroxy-10'-apo-alpha-carotenal + O2 = (3R,6R)-hydroxy-alpha-ionone + 4,9-dimethyldodeca-2,4,6,8,10-pentaenedial. Functionally, broad specificity mitochondrial dioxygenase that mediates the asymmetric oxidative cleavage of carotenoids. Cleaves carotenes (pure hydrocarbon carotenoids) such as all-trans-beta-carotene and lycopene as well as xanthophylls (oxygenated carotenoids) such as zeaxanthin, lutein and beta-cryptoxanthin at both the 9,10 and the 9',10' carbon-carbon double bond. Through its function in carotenoids metabolism regulates oxidative stress and the production of important signaling molecules. The chain is Carotenoid-cleaving dioxygenase, mitochondrial from Macaca fascicularis (Crab-eating macaque).